The following is a 206-amino-acid chain: Adenylyl-sulfate kinase (206 aa).

31-38 (GLSASGKS) is a binding site for ATP. Serine 105 functions as the Phosphoserine intermediate in the catalytic mechanism.

This sequence belongs to the APS kinase family.

It carries out the reaction adenosine 5'-phosphosulfate + ATP = 3'-phosphoadenylyl sulfate + ADP + H(+). It functions in the pathway sulfur metabolism; hydrogen sulfide biosynthesis; sulfite from sulfate: step 2/3. In terms of biological role, catalyzes the synthesis of activated sulfate. This Emericella nidulans (strain FGSC A4 / ATCC 38163 / CBS 112.46 / NRRL 194 / M139) (Aspergillus nidulans) protein is Adenylyl-sulfate kinase (sD).